Reading from the N-terminus, the 503-residue chain is V-type proton ATPase subunit B (503 aa).

Position 378 (arginine 378) interacts with ATP. Serine 491, serine 492, serine 502, and serine 503 each carry phosphoserine.

It belongs to the ATPase alpha/beta chains family. In terms of assembly, V-ATPase is a heteromultimeric enzyme composed of a peripheral catalytic V1 complex (components A to H) attached to an integral membrane V0 proton pore complex (components: a, c, c', c'', d, e, f and VOA1). Interacts with rav1.

The protein localises to the vacuole membrane. In terms of biological role, non-catalytic subunit of the V1 complex of vacuolar(H+)-ATPase (V-ATPase), a multisubunit enzyme composed of a peripheral complex (V1) that hydrolyzes ATP and a membrane integral complex (V0) that translocates protons. V-ATPase is responsible for acidifying and maintaining the pH of intracellular compartments. The sequence is that of V-type proton ATPase subunit B from Schizosaccharomyces pombe (strain 972 / ATCC 24843) (Fission yeast).